The primary structure comprises 396 residues: Phosphoglycerate kinase (396 aa).

Residues D21–N23, R36, H59–R62, R118, and R151 each bind substrate. ATP contacts are provided by residues K201, G292, E323, and G349 to S352.

This sequence belongs to the phosphoglycerate kinase family. As to quaternary structure, monomer.

The protein resides in the cytoplasm. The enzyme catalyses (2R)-3-phosphoglycerate + ATP = (2R)-3-phospho-glyceroyl phosphate + ADP. Its pathway is carbohydrate degradation; glycolysis; pyruvate from D-glyceraldehyde 3-phosphate: step 2/5. The chain is Phosphoglycerate kinase from Leptospira interrogans serogroup Icterohaemorrhagiae serovar copenhageni (strain Fiocruz L1-130).